Consider the following 743-residue polypeptide: FHF complex subunit HOOK-interacting protein 2B (743 aa).

Residues 186 to 219 (CGEPTALPKDTTSHGDKDCSHDGAPARPQLDGES) form a disordered region. Positions 196 to 206 (TTSHGDKDCSH) are enriched in basic and acidic residues.

This sequence belongs to the FHIP family. In terms of tissue distribution, expressed in liver.

Able to activate MAPK/ERK and TGFB signaling pathways. May regulate the activity of genes involved in intestinal barrier function and immunoprotective inflammation. May play a role in cell proliferation. In Homo sapiens (Human), this protein is FHF complex subunit HOOK-interacting protein 2B.